A 356-amino-acid polypeptide reads, in one-letter code: MFEAIIYNISVTVAGIYLFHRLQYSENRIMVFSKEYVTVLMTIVALLLSAYPVPIFNEYTLYLSFVPILFLGRYTNMFYTVLSAFIVGLVNVLIGDYTIITAMIFIVIAGIIGAIGPFLKQSDIISLQILNVIALVIFAILSLISPYYEITEVLFLIPISFVLTITSSITFVDIWHFFSLVNRYENEDKVDYLTGLGNVKEFDRHLNETARLSEENNQSLGLLLIDIDGFKDVNDMYSHKSGDAVLRQVAQLLKNYVPQQFSIYRNGGEEFSIVLYDYTLDQCVKLSESIRGGVEQSTFHLPNKEVIKLSVSIGVGYLTTDDYKSQRKVFKIADDMLHMAKNEGRNQVMFNPIVKL.

The next 6 membrane-spanning stretches (helical) occupy residues 2-22, 36-56, 77-97, 99-119, 124-144, and 154-174; these read FEAI…FHRL, YVTV…VPIF, MFYT…IGDY, IITA…GPFL, IISL…LSLI, and LFLI…FVDI. In terms of domain architecture, GGDEF spans 218–353; the sequence is QSLGLLLIDI…GRNQVMFNPI (136 aa).

The protein localises to the cell membrane. This is an uncharacterized protein from Staphylococcus saprophyticus subsp. saprophyticus (strain ATCC 15305 / DSM 20229 / NCIMB 8711 / NCTC 7292 / S-41).